The following is a 222-amino-acid chain: Ribulose-phosphate 3-epimerase (222 aa).

A substrate-binding site is contributed by Ser-7. His-32, Asp-34, and His-65 together coordinate a divalent metal cation. The active-site Proton acceptor is Asp-34. Substrate is bound by residues His-65, 141 to 144 (GFSG), 174 to 176 (DGG), and 196 to 197 (GS). Asp-174 is an a divalent metal cation binding site. Asp-174 serves as the catalytic Proton donor.

The protein belongs to the ribulose-phosphate 3-epimerase family. The cofactor is a divalent metal cation.

It carries out the reaction D-ribulose 5-phosphate = D-xylulose 5-phosphate. It participates in carbohydrate degradation. Catalyzes the reversible epimerization of D-ribulose 5-phosphate to D-xylulose 5-phosphate. In Aquifex aeolicus (strain VF5), this protein is Ribulose-phosphate 3-epimerase.